Consider the following 233-residue polypeptide: Low affinity immunoglobulin gamma Fc region receptor III-B (233 aa).

The signal sequence occupies residues 1–16 (MWQLLLPTALLLLVSA). Ig-like C2-type domains follow at residues 40–96 (KDSV…LSTL) and 121–179 (EDPI…VGSK). A disulfide bond links Cys-47 and Cys-89. Asn-56, Asn-63, Asn-82, and Asn-92 each carry an N-linked (GlcNAc...) asparagine glycan. Cys-128 and Cys-172 are disulfide-bonded. N-linked (GlcNAc...) asparagine glycans are attached at residues Asn-180 and Asn-187. Ser-200 carries the GPI-anchor amidated serine lipid modification. The propeptide at 201–233 (SFSPPGYQVSFCLVMVLLFAVDTGLYFSVKTNI) is removed in mature form.

As to quaternary structure, monomer. Interacts with INPP5D/SHIP1. Post-translationally, glycosylated. Glycosylation plays an inhibitory role in the interaction with IgG3. In terms of processing, the soluble form is produced by a proteolytic cleavage. Expressed specifically by polymorphonuclear leukocytes (neutrophils). Also expressed by stimulated eosinophils.

It localises to the cell membrane. The protein resides in the secreted. Its function is as follows. Receptor for the Fc region of immunoglobulins gamma. Low affinity receptor. Binds complexed or aggregated IgG and also monomeric IgG. Contrary to III-A, is not capable to mediate antibody-dependent cytotoxicity and phagocytosis. May serve as a trap for immune complexes in the peripheral circulation which does not activate neutrophils. The polypeptide is Low affinity immunoglobulin gamma Fc region receptor III-B (FCGR3B) (Homo sapiens (Human)).